Reading from the N-terminus, the 670-residue chain is MTSERKMLVTSALPYANGHLHLGHLVEHIQTDIWVRTHKMLGIQCISVCGDDAHGTPIMLKAEQLGITPEALTAEIKLSHEKDFKAFAIDYDYYHTTHSPENQVLATTIFERLQAGGDIVKKTIRQFYDPVKQMFLPDRYVKGTCPKCAAVDQYGDNCEVCGATYSPTDLINPVSVISGASPVEKESEHYFFDLPLYEELLKDWTRKGHLQAEVTNKLSEWFEAGLKQWDISRDAPYFGFPIPGVPDKYFYVWLDAPIGYMASFKKYCDERGVSFDEFWDKASKTELYHFVGKDIVYFHALFWPAMLAASGFRTPTAVYTHGFLTVEGQKMSKSRGTFIEARAYLAHLHPEYLRYYFAAKLNGRVDDLDLNFDDFVNRVNADLVGKVVNIASRCAGFINKRFDNRLSSELNDPKLHNDLLSARESVIDAFVSRDYARAIRQIMDCADKVNQYIDANKPWVLAKDESKLNEVHAICTMGINLFRILITYLKPVLPMMAKASEEFLNSEPLHWGSIDKPLLNHRINTFKPLMVRVEKEKIEAMLVQSKESLMTTPVKENTPVEDANLISIEDFAKVDLRIAKIVNAEPVEGADKLMRLILDLGDAQKQVFAGIKKAYDAEELIGRLTVMVANLEPRTMRFGVSEGMVLAAGDGQGIYLLQPDAGALPGMKVK.

Residues 14-24 (PYANGHLHLGH) carry the 'HIGH' region motif. Zn(2+) contacts are provided by cysteine 145, cysteine 148, cysteine 158, and cysteine 161. Positions 330-334 (KMSKS) match the 'KMSKS' region motif. ATP is bound at residue lysine 333. A tRNA-binding domain is found at 570-670 (DFAKVDLRIA…AGALPGMKVK (101 aa)).

It belongs to the class-I aminoacyl-tRNA synthetase family. MetG type 1 subfamily. In terms of assembly, homodimer. Zn(2+) serves as cofactor.

The protein resides in the cytoplasm. It carries out the reaction tRNA(Met) + L-methionine + ATP = L-methionyl-tRNA(Met) + AMP + diphosphate. Is required not only for elongation of protein synthesis but also for the initiation of all mRNA translation through initiator tRNA(fMet) aminoacylation. This chain is Methionine--tRNA ligase, found in Legionella pneumophila (strain Paris).